Here is a 514-residue protein sequence, read N- to C-terminus: Cardiolipin synthase 2 (514 aa).

3 helical membrane-spanning segments follow: residues 7–27, 41–61, and 71–91; these read LIFFVLLLFALFVSLRMFIDV, ILGIISILFTVSAFLIGCVIF, and LTWLIVLGIFPVFGFFAYLLF. PLD phosphodiesterase domains are found at residues 249–276 and 427–454; these read INYRNHRKIVIIDGNEGFVGGLNIGDEY and EKGFLHSKVVIVDSDLASIGTANMDMRS. Residues His254, Lys256, Asp261, His432, Lys434, and Asp439 contribute to the active site.

The protein belongs to the phospholipase D family. Cardiolipin synthase subfamily.

Its subcellular location is the cell membrane. The enzyme catalyses 2 a 1,2-diacyl-sn-glycero-3-phospho-(1'-sn-glycerol) = a cardiolipin + glycerol. Functionally, catalyzes the reversible phosphatidyl group transfer from one phosphatidylglycerol molecule to another to form cardiolipin (CL) (diphosphatidylglycerol) and glycerol. The sequence is that of Cardiolipin synthase 2 (cls2) from Bacillus anthracis.